A 307-amino-acid chain; its full sequence is Aspartate carbamoyltransferase catalytic subunit (307 aa).

Carbamoyl phosphate contacts are provided by arginine 54 and threonine 55. Lysine 83 is a binding site for L-aspartate. The carbamoyl phosphate site is built by arginine 104, histidine 132, and glutamine 135. Positions 165 and 228 each coordinate L-aspartate. The carbamoyl phosphate site is built by leucine 267 and proline 268.

It belongs to the aspartate/ornithine carbamoyltransferase superfamily. ATCase family. Heterododecamer (2C3:3R2) of six catalytic PyrB chains organized as two trimers (C3), and six regulatory PyrI chains organized as three dimers (R2).

The catalysed reaction is carbamoyl phosphate + L-aspartate = N-carbamoyl-L-aspartate + phosphate + H(+). The protein operates within pyrimidine metabolism; UMP biosynthesis via de novo pathway; (S)-dihydroorotate from bicarbonate: step 2/3. Catalyzes the condensation of carbamoyl phosphate and aspartate to form carbamoyl aspartate and inorganic phosphate, the committed step in the de novo pyrimidine nucleotide biosynthesis pathway. The chain is Aspartate carbamoyltransferase catalytic subunit from Clostridium botulinum (strain Okra / Type B1).